Consider the following 400-residue polypeptide: Formate-dependent phosphoribosylglycinamide formyltransferase (400 aa).

N(1)-(5-phospho-beta-D-ribosyl)glycinamide-binding positions include 22-23 and Glu-82; that span reads EL. ATP is bound by residues Arg-115, Lys-156, 161–166, 196–199, and Glu-204; these read SSGKGQ and EGFI. In terms of domain architecture, ATP-grasp spans 120–309; that stretch reads RLAAETLGLP…EFALHARAIL (190 aa). Glu-268 and Glu-280 together coordinate Mg(2+). N(1)-(5-phospho-beta-D-ribosyl)glycinamide-binding positions include Asp-287, Lys-361, and 368-369; that span reads RR.

The protein belongs to the PurK/PurT family. Homodimer.

It catalyses the reaction N(1)-(5-phospho-beta-D-ribosyl)glycinamide + formate + ATP = N(2)-formyl-N(1)-(5-phospho-beta-D-ribosyl)glycinamide + ADP + phosphate + H(+). Its pathway is purine metabolism; IMP biosynthesis via de novo pathway; N(2)-formyl-N(1)-(5-phospho-D-ribosyl)glycinamide from N(1)-(5-phospho-D-ribosyl)glycinamide (formate route): step 1/1. In terms of biological role, involved in the de novo purine biosynthesis. Catalyzes the transfer of formate to 5-phospho-ribosyl-glycinamide (GAR), producing 5-phospho-ribosyl-N-formylglycinamide (FGAR). Formate is provided by PurU via hydrolysis of 10-formyl-tetrahydrofolate. The polypeptide is Formate-dependent phosphoribosylglycinamide formyltransferase (Xanthomonas oryzae pv. oryzae (strain KACC10331 / KXO85)).